The chain runs to 835 residues: Cap-specific mRNA (nucleoside-2'-O-)-methyltransferase 1 (835 aa).

Positions 2–19 (RRRNDPECTAPIKKQKKR) match the Bipartite nuclear localization signal motif. The tract at residues 24–68 (ALNLSAASGDEPPSSVNHAAKASTTSLSGSDSETEGKQHGSDSFD) is disordered. Phosphoserine occurs at positions 28, 31, 53, 66, and 91. A compositionally biased stretch (polar residues) spans 37–54 (SSVNHAAKASTTSLSGSD). The segment covering 57–68 (TEGKQHGSDSFD) has biased composition (basic and acidic residues). The 47-residue stretch at 87–133 (YNSVSQKLMAKMGFREGEGLGKYSQGRKDIVEASNQKGRRGLGLTLQ) folds into the G-patch domain. Lys108 carries the N6-acetyllysine modification. Substrate contacts are provided by residues 203-207 (KSVFD) and Arg218. The RrmJ-type SAM-dependent 2'-O-MTase domain occupies 231–450 (FFLNRAAMKM…ERYVVCKGLK (220 aa)). Asn234 is an S-adenosyl-L-methionine binding site. Residue Lys239 is part of the active site. Residues 277-283 (CAGPGGF) and 335-336 (DI) each bind S-adenosyl-L-methionine. Asp364 is an active-site residue. Position 374–376 (374–376 (NLQ)) interacts with substrate. The Proton acceptor role is filled by Lys404. Residue Asn439 coordinates substrate. An interaction with POLR2A region spans residues 727 to 835 (SSGTPKLSYT…VLSFIQTHSA (109 aa)). One can recognise a WW domain in the interval 752–786 (RTVNEPWTMGFSKSFKRKFFYNKKTKISTFDLPAD).

In terms of assembly, interacts with POLR2A (via C-terminus).

It is found in the nucleus. The catalysed reaction is a 5'-end (N(7)-methyl 5'-triphosphoguanosine)-ribonucleoside in mRNA + S-adenosyl-L-methionine = a 5'-end (N(7)-methyl 5'-triphosphoguanosine)-(2'-O-methyl-ribonucleoside) in mRNA + S-adenosyl-L-homocysteine + H(+). In terms of biological role, S-adenosyl-L-methionine-dependent methyltransferase that mediates mRNA cap1 2'-O-ribose methylation to the 5'-cap structure of mRNAs. Methylates the ribose of the first nucleotide of a m(7)GpppG-capped mRNA and small nuclear RNA (snRNA) to produce m(7)GpppRm (cap1). Displays a preference for cap0 transcripts. Cap1 modification is linked to higher levels of translation. May be involved in the interferon response pathway. The chain is Cap-specific mRNA (nucleoside-2'-O-)-methyltransferase 1 (CMTR1) from Ailuropoda melanoleuca (Giant panda).